The sequence spans 96 residues: Small ribosomal subunit protein bS6 (96 aa).

It belongs to the bacterial ribosomal protein bS6 family.

Binds together with bS18 to 16S ribosomal RNA. This chain is Small ribosomal subunit protein bS6, found in Bacillus thuringiensis subsp. konkukian (strain 97-27).